The sequence spans 158 residues: Ribosome maturation factor RimP (158 aa).

This sequence belongs to the RimP family.

The protein localises to the cytoplasm. Functionally, required for maturation of 30S ribosomal subunits. In Pseudomonas fluorescens (strain SBW25), this protein is Ribosome maturation factor RimP.